Consider the following 166-residue polypeptide: NAD(P)H-quinone oxidoreductase subunit I, chloroplastic (166 aa).

2 consecutive 4Fe-4S ferredoxin-type domains span residues glycine 55–lysine 84 and leucine 95–glutamate 124. 8 residues coordinate [4Fe-4S] cluster: cysteine 64, cysteine 67, cysteine 70, cysteine 74, cysteine 104, cysteine 107, cysteine 110, and cysteine 114.

Belongs to the complex I 23 kDa subunit family. NDH is composed of at least 16 different subunits, 5 of which are encoded in the nucleus. [4Fe-4S] cluster serves as cofactor.

It localises to the plastid. It is found in the chloroplast thylakoid membrane. The catalysed reaction is a plastoquinone + NADH + (n+1) H(+)(in) = a plastoquinol + NAD(+) + n H(+)(out). It catalyses the reaction a plastoquinone + NADPH + (n+1) H(+)(in) = a plastoquinol + NADP(+) + n H(+)(out). In terms of biological role, NDH shuttles electrons from NAD(P)H:plastoquinone, via FMN and iron-sulfur (Fe-S) centers, to quinones in the photosynthetic chain and possibly in a chloroplast respiratory chain. The immediate electron acceptor for the enzyme in this species is believed to be plastoquinone. Couples the redox reaction to proton translocation, and thus conserves the redox energy in a proton gradient. The polypeptide is NAD(P)H-quinone oxidoreductase subunit I, chloroplastic (Tridax balbisioides (Coatbuttons)).